The sequence spans 460 residues: NADH-ubiquinone oxidoreductase chain 4 (460 aa).

The next 13 membrane-spanning stretches (helical) occupy residues 22 to 42 (WLWS…LSWF), 59 to 79 (IDPL…LMIL), 94 to 113 (RIYI…AFSA), 117 to 139 (ILFY…RWGN), 148 to 168 (TYFL…LLFM), 195 to 215 (FWWT…GVHL), 231 to 251 (ILAA…IIML), 258 to 278 (MAYP…SICL), 286 to 306 (MIAY…LIQT), 310 to 330 (FAGA…LFCL), 343 to 362 (LLLA…WWLL), 394 to 414 (ILLT…MFLM), and 436 to 456 (LLLT…ELIW).

The protein belongs to the complex I subunit 4 family.

Its subcellular location is the mitochondrion membrane. It catalyses the reaction a ubiquinone + NADH + 5 H(+)(in) = a ubiquinol + NAD(+) + 4 H(+)(out). Its function is as follows. Core subunit of the mitochondrial membrane respiratory chain NADH dehydrogenase (Complex I) that is believed to belong to the minimal assembly required for catalysis. Complex I functions in the transfer of electrons from NADH to the respiratory chain. The immediate electron acceptor for the enzyme is believed to be ubiquinone. The polypeptide is NADH-ubiquinone oxidoreductase chain 4 (MTND4) (Scyliorhinus canicula (Small-spotted catshark)).